We begin with the raw amino-acid sequence, 264 residues long: Thiazole synthase (264 aa).

The Schiff-base intermediate with DXP role is filled by Lys106. 1-deoxy-D-xylulose 5-phosphate contacts are provided by residues Gly167, 193 to 194, and 215 to 216; these read AG and NS.

The protein belongs to the ThiG family. As to quaternary structure, homotetramer. Forms heterodimers with either ThiH or ThiS.

Its subcellular location is the cytoplasm. It catalyses the reaction [ThiS sulfur-carrier protein]-C-terminal-Gly-aminoethanethioate + 2-iminoacetate + 1-deoxy-D-xylulose 5-phosphate = [ThiS sulfur-carrier protein]-C-terminal Gly-Gly + 2-[(2R,5Z)-2-carboxy-4-methylthiazol-5(2H)-ylidene]ethyl phosphate + 2 H2O + H(+). Its pathway is cofactor biosynthesis; thiamine diphosphate biosynthesis. In terms of biological role, catalyzes the rearrangement of 1-deoxy-D-xylulose 5-phosphate (DXP) to produce the thiazole phosphate moiety of thiamine. Sulfur is provided by the thiocarboxylate moiety of the carrier protein ThiS. In vitro, sulfur can be provided by H(2)S. This Ectopseudomonas mendocina (strain ymp) (Pseudomonas mendocina) protein is Thiazole synthase.